The following is a 386-amino-acid chain: MEELDALLEELERSTLQDSDEYSNSAPLPLDQSSRKESNLDETSKMLSVQDSTNPFPVQLVYTTNIQDRNVYSEVQEPKKSPPPAKTSAAAQLDELMAHLSEMQAKVSVKADAGKKPVSENLDHKASLDSMLGGLEQELQNLGIPTVPKGHCASCQKPIVGKVIHALGQSWHPEHFICTHCKEEIGSSPFFERSGLAYCPKDYHHLFSPRCAYCAAPILDKVLTAMNQTWHPEHFFCSHCGEVFGTEGFHEKDKKPYCRKDFLAMFSPKCGGCNRPVLENYLSAMNTVWHPECFVCGDCFSSFSTGSFFELEGRPFCELHYHQRRGTLCHGCGQPITGRCISAMGHKFHPEHFVCAFCLTQLSKGVFREQNDKTYCQPCFNKLFSL.

Methionine 1 carries the N-acetylmethionine modification. The LD motif 1 motif lies at 3–15 (ELDALLEELERST). The interval 12-51 (ERSTLQDSDEYSNSAPLPLDQSSRKESNLDETSKMLSVQD) is disordered. Polar residues predominate over residues 16–26 (LQDSDEYSNSA). Phosphoserine is present on serine 19. Residue tyrosine 22 is modified to Phosphotyrosine. Residues 33 to 44 (SSRKESNLDETS) show a composition bias toward basic and acidic residues. Phosphotyrosine is present on tyrosine 62. 2 short sequence motifs (LD motif) span residues 70-82 (NVYS…KKSP) and 92-103 (QLDELMAHLSEM). The residue at position 72 (tyrosine 72) is a Phosphotyrosine; by LYN. Serine 81 is modified (phosphoserine). 4 consecutive LIM zinc-binding domains span residues 150-209 (GHCA…LFSP), 210-267 (RCAY…AMFS), 268-327 (PKCG…RRGT), and 328-386 (LCHG…LFSL).

Belongs to the paxillin family. As to quaternary structure, interacts with unphosphorylated ITGA4. Interacts with AR and SRF. Interacts with PTK2B/PYK2, PTPN22 and PTPN12. Interacts (via LD motif 3) with LYN and the interaction is induced upon B-cell antigen receptor (BCR) activation. Interacts (via LD motif 3) with PTK2/FAK. Phosphorylated on tyrosine residues. Phosphorylation on Tyr-72 is important for its inhibitory function. Bombesin stimulates phosphorylation on Tyr-22, Tyr-62 and Tyr-72.

It is found in the cytoplasm. The protein localises to the cell junction. Its subcellular location is the focal adhesion. The protein resides in the nucleus. It localises to the perinuclear region. It is found in the cell projection. The protein localises to the podosome. Its subcellular location is the cell membrane. Its function is as follows. Transcriptional coactivator for androgen receptor (AR) and serum response factor (SRF). Contributes to the regulation of cell adhesion, spreading and cell migration and acts as a negative regulator in integrin-mediated cell adhesion events. Suppresses the integrin-induced tyrosine phosphorylation of paxillin (PXN). May play a critical role as an adapter protein in the formation of the adhesion zone in osteoclasts. Negatively regulates B-cell antigen receptor (BCR) signaling. The chain is Leupaxin (LPXN) from Oryctolagus cuniculus (Rabbit).